We begin with the raw amino-acid sequence, 156 residues long: Arginine repressor (156 aa).

The protein belongs to the ArgR family.

The protein localises to the cytoplasm. It functions in the pathway amino-acid biosynthesis; L-arginine biosynthesis [regulation]. In terms of biological role, regulates arginine biosynthesis genes. The polypeptide is Arginine repressor (Shewanella putrefaciens (strain CN-32 / ATCC BAA-453)).